The chain runs to 338 residues: tRNA N6-adenosine threonylcarbamoyltransferase (338 aa).

Positions 111 and 115 each coordinate Fe cation. Residues 134–138 (LVSGG), D167, G180, and N272 contribute to the substrate site. A Fe cation-binding site is contributed by D300.

The protein belongs to the KAE1 / TsaD family. The cofactor is Fe(2+).

It localises to the cytoplasm. The enzyme catalyses L-threonylcarbamoyladenylate + adenosine(37) in tRNA = N(6)-L-threonylcarbamoyladenosine(37) in tRNA + AMP + H(+). Required for the formation of a threonylcarbamoyl group on adenosine at position 37 (t(6)A37) in tRNAs that read codons beginning with adenine. Is involved in the transfer of the threonylcarbamoyl moiety of threonylcarbamoyl-AMP (TC-AMP) to the N6 group of A37, together with TsaE and TsaB. TsaD likely plays a direct catalytic role in this reaction. This is tRNA N6-adenosine threonylcarbamoyltransferase from Vibrio parahaemolyticus serotype O3:K6 (strain RIMD 2210633).